Reading from the N-terminus, the 1240-residue chain is Phospholipid-transporting ATPase 6 (1240 aa).

Over 1-75 (MARRRIRSRI…TTRYNLLTFL (75 aa)) the chain is Cytoplasmic. A helical transmembrane segment spans residues 76-97 (PKCLYEQFHRVANFYFLVAAIL). At 98-101 (SVFP) the chain is on the extracellular side. Residues 102 to 124 (LSPFNKWSMIAPLVFVVGLSMGK) traverse the membrane as a helical segment. The Cytoplasmic segment spans residues 125 to 306 (EALEDWRRFM…SRIEKRMDYI (182 aa)). A helical membrane pass occupies residues 307–328 (IYTLFALLLTVSFISSLGFAVM). The Extracellular segment spans residues 329 to 360 (TKLLMAEWWYLRPDKPESLTNPTNPLYAWVVH). Residues 361–378 (LITALLLYGYLIPISLYV) form a helical membrane-spanning segment. Over 379-943 (SIEVVKVLQA…HGHWCYKRIA (565 aa)) the chain is Cytoplasmic. The 4-aspartylphosphate intermediate role is filled by D426. K625 participates in a covalent cross-link: Glycyl lysine isopeptide (Lys-Gly) (interchain with G-Cter in ubiquitin). 2 residues coordinate Mg(2+): D888 and D892. A helical transmembrane segment spans residues 944–963 (QMICYFFYKNITFGLTLFYF). Topologically, residues 964–977 (ECFTGFSGQSIYND) are extracellular. Residues 978-997 (SYLLLFNVVLTSLPVISLGV) form a helical membrane-spanning segment. The Cytoplasmic portion of the chain corresponds to 998–1027 (FEQDVPSDVCLQFPALYQQGPKNLFFDWYR). Residues 1028-1050 (ILGWMGNGVYASIVIFTLNLGIF) form a helical membrane-spanning segment. The Extracellular segment spans residues 1051-1063 (HVQSFRSDGQTAD). A helical membrane pass occupies residues 1064 to 1086 (MNAMGTAMFTCIIWAVNVQIALT). At 1087–1092 (MSHFTW) the chain is on the cytoplasmic side. Residues 1093–1113 (IQHVMIWGSIGAWYVFLALYG) form a helical membrane-spanning segment. Over 1114–1130 (MLPVKLSGNIFHMLVEI) the chain is Extracellular. Residues 1131 to 1155 (LAPAPIFWLTSLLVIAATTLPYLFH) form a helical membrane-spanning segment. Residues 1156 to 1240 (ISYQRSVNPL…SNDTPSSNSQ (85 aa)) are Cytoplasmic-facing.

Belongs to the cation transport ATPase (P-type) (TC 3.A.3) family. Type IV subfamily.

The protein localises to the cell membrane. It localises to the endomembrane system. The catalysed reaction is ATP + H2O + phospholipidSide 1 = ADP + phosphate + phospholipidSide 2.. In terms of biological role, involved in transport of phospholipids and in regulation of pollen plasma membrane lipid asymmetry. The sequence is that of Phospholipid-transporting ATPase 6 from Arabidopsis thaliana (Mouse-ear cress).